The primary structure comprises 81 residues: Photosystem I iron-sulfur center (81 aa).

4Fe-4S ferredoxin-type domains are found at residues 2-31 (SHSV…MIPW) and 39-68 (IASA…VRVY). Residues cysteine 11, cysteine 14, cysteine 17, cysteine 21, cysteine 48, cysteine 51, cysteine 54, and cysteine 58 each contribute to the [4Fe-4S] cluster site.

The eukaryotic PSI reaction center is composed of at least 11 subunits. [4Fe-4S] cluster serves as cofactor.

It localises to the plastid. Its subcellular location is the chloroplast thylakoid membrane. It catalyses the reaction reduced [plastocyanin] + hnu + oxidized [2Fe-2S]-[ferredoxin] = oxidized [plastocyanin] + reduced [2Fe-2S]-[ferredoxin]. Its function is as follows. Apoprotein for the two 4Fe-4S centers FA and FB of photosystem I (PSI); essential for photochemical activity. FB is the terminal electron acceptor of PSI, donating electrons to ferredoxin. The C-terminus interacts with PsaA/B/D and helps assemble the protein into the PSI complex. Required for binding of PsaD and PsaE to PSI. PSI is a plastocyanin-ferredoxin oxidoreductase, converting photonic excitation into a charge separation, which transfers an electron from the donor P700 chlorophyll pair to the spectroscopically characterized acceptors A0, A1, FX, FA and FB in turn. The sequence is that of Photosystem I iron-sulfur center from Helianthus annuus (Common sunflower).